We begin with the raw amino-acid sequence, 668 residues long: Bifunctional polymyxin resistance protein ArnA (668 aa).

Residues 1–307 (MSAKTVVFAY…ELGLVDGSLL (307 aa)) are formyltransferase ArnAFT. His106 serves as the catalytic Proton donor; for formyltransferase activity. (6R)-10-formyltetrahydrofolate is bound by residues Arg116 and 138-142 (VKRAD). A dehydrogenase ArnADH region spans residues 317-668 (RRTRVLILGV…IERPSNKEAC (352 aa)). Residues Asp350 and 371–372 (DI) each bind NAD(+). Residues Ala396, Tyr401, and 435–436 (TS) contribute to the UDP-alpha-D-glucuronate site. Catalysis depends on Glu437, which acts as the Proton acceptor; for decarboxylase activity. UDP-alpha-D-glucuronate is bound by residues Arg463, Asn494, 528-537 (RLFDGGEQKR), and Tyr615. Catalysis depends on Arg621, which acts as the Proton donor; for decarboxylase activity.

This sequence in the N-terminal section; belongs to the Fmt family. UDP-L-Ara4N formyltransferase subfamily. The protein in the C-terminal section; belongs to the NAD(P)-dependent epimerase/dehydratase family. UDP-glucuronic acid decarboxylase subfamily. As to quaternary structure, homohexamer, formed by a dimer of trimers.

It catalyses the reaction UDP-alpha-D-glucuronate + NAD(+) = UDP-beta-L-threo-pentopyranos-4-ulose + CO2 + NADH. It carries out the reaction UDP-4-amino-4-deoxy-beta-L-arabinose + (6R)-10-formyltetrahydrofolate = UDP-4-deoxy-4-formamido-beta-L-arabinose + (6S)-5,6,7,8-tetrahydrofolate + H(+). It participates in nucleotide-sugar biosynthesis; UDP-4-deoxy-4-formamido-beta-L-arabinose biosynthesis; UDP-4-deoxy-4-formamido-beta-L-arabinose from UDP-alpha-D-glucuronate: step 1/3. Its pathway is nucleotide-sugar biosynthesis; UDP-4-deoxy-4-formamido-beta-L-arabinose biosynthesis; UDP-4-deoxy-4-formamido-beta-L-arabinose from UDP-alpha-D-glucuronate: step 3/3. It functions in the pathway bacterial outer membrane biogenesis; lipopolysaccharide biosynthesis. Its function is as follows. Bifunctional enzyme that catalyzes the oxidative decarboxylation of UDP-glucuronic acid (UDP-GlcUA) to UDP-4-keto-arabinose (UDP-Ara4O) and the addition of a formyl group to UDP-4-amino-4-deoxy-L-arabinose (UDP-L-Ara4N) to form UDP-L-4-formamido-arabinose (UDP-L-Ara4FN). The modified arabinose is attached to lipid A and is required for resistance to polymyxin and cationic antimicrobial peptides. The chain is Bifunctional polymyxin resistance protein ArnA from Pseudomonas fluorescens (strain Pf0-1).